Here is an 859-residue protein sequence, read N- to C-terminus: Leucine--tRNA ligase (859 aa).

A 'HIGH' region motif is present at residues 43 to 53 (PYPSGRIHMGH). Positions 614–618 (KMSKS) match the 'KMSKS' region motif. ATP is bound at residue Lys-617.

The protein belongs to the class-I aminoacyl-tRNA synthetase family.

Its subcellular location is the cytoplasm. The catalysed reaction is tRNA(Leu) + L-leucine + ATP = L-leucyl-tRNA(Leu) + AMP + diphosphate. The protein is Leucine--tRNA ligase of Magnetococcus marinus (strain ATCC BAA-1437 / JCM 17883 / MC-1).